Reading from the N-terminus, the 550-residue chain is 65-kDa microtubule-associated protein 5 (550 aa).

Coiled-coil stretches lie at residues 46–174 (NKKV…QKVN) and 288–310 (IREA…KELV). The segment at 471 to 531 (QFREQKRLQG…PGRSVTSGGK (61 aa)) is disordered. Residues 502 to 511 (QSLNTDNVTK) show a composition bias toward polar residues.

The protein belongs to the MAP65/ASE1 family. Forms a dimer. Binds to MT, mostly with coaligned MT, both between parallel or antiparallel, forming thick bundles. Bundles polymerized MT via the formation of 25-nm crossbridges with cortical MT.

It is found in the nucleus. It localises to the cytoplasm. The protein resides in the cytoskeleton. Its subcellular location is the spindle. The protein localises to the phragmoplast. It is found in the cell cortex. It localises to the cell junction. The protein resides in the plasmodesma. Microtubule-associated protein that bundle and stabilize adjacent microtubules (MT) of the cell cortex. Confers MT resistance to the drug oryzalin. Promotes the formation of a planar network of antiparallel microtubules. This chain is 65-kDa microtubule-associated protein 5 (MAP65-5), found in Arabidopsis thaliana (Mouse-ear cress).